A 143-amino-acid chain; its full sequence is Large ribosomal subunit protein uL15 (143 aa).

The segment at 1-54 is disordered; that stretch reads MELNSIKPAEGAKHAKRRVGRGIGSGLGKTAGRGHKGQKSRSGGYHKVGFEGGQ. The segment covering 21–31 has biased composition (gly residues); that stretch reads RGIGSGLGKTA.

This sequence belongs to the universal ribosomal protein uL15 family. Part of the 50S ribosomal subunit.

Functionally, binds to the 23S rRNA. This chain is Large ribosomal subunit protein uL15, found in Paracidovorax citrulli (strain AAC00-1) (Acidovorax citrulli).